Here is a 694-residue protein sequence, read N- to C-terminus: Glycine--tRNA ligase beta subunit (694 aa).

The protein belongs to the class-II aminoacyl-tRNA synthetase family. As to quaternary structure, tetramer of two alpha and two beta subunits.

Its subcellular location is the cytoplasm. The catalysed reaction is tRNA(Gly) + glycine + ATP = glycyl-tRNA(Gly) + AMP + diphosphate. The sequence is that of Glycine--tRNA ligase beta subunit from Shewanella denitrificans (strain OS217 / ATCC BAA-1090 / DSM 15013).